An 865-amino-acid chain; its full sequence is Alanine--tRNA ligase (865 aa).

His556, His560, Cys660, and His664 together coordinate Zn(2+).

This sequence belongs to the class-II aminoacyl-tRNA synthetase family. Zn(2+) is required as a cofactor.

The protein resides in the cytoplasm. It carries out the reaction tRNA(Ala) + L-alanine + ATP = L-alanyl-tRNA(Ala) + AMP + diphosphate. In terms of biological role, catalyzes the attachment of alanine to tRNA(Ala) in a two-step reaction: alanine is first activated by ATP to form Ala-AMP and then transferred to the acceptor end of tRNA(Ala). Also edits incorrectly charged Ser-tRNA(Ala) and Gly-tRNA(Ala) via its editing domain. This chain is Alanine--tRNA ligase, found in Ruthia magnifica subsp. Calyptogena magnifica.